Reading from the N-terminus, the 1462-residue chain is MALLYRRMSMLLNIILAYIFLCAICVQGSVKQEWAEIGKNVSLECASENEAVAWKLGNQTINKNHTRYKIRTEPLKSNDDGSENNDSQDFIKYKNVLALLDVNIKDSGNYTCTAQTGQNHSTEFQVRPYLPSKVLQSTPDRIKRKIKQDVMLYCLIEMYPQNETTNRNLKWLKDGSQFEFLDTFSSISKLNDTHLNFTLEFTEVYKKENGTYKCTVFDDTGLEITSKEITLFVMEVPQVSIDFAKAVGANKIYLNWTVNDGNDPIQKFFITLQEAGTPTFTYHKDFINGSHTSYILDHFKPNTTYFLRIVGKNSIGNGQPTQYPQGITTLSYDPIFIPKVETTGSTASTITIGWNPPPPDLIDYIQYYELIVSESGEVPKVIEEAIYQQNSRNLPYMFDKLKTATDYEFRVRACSDLTKTCGPWSENVNGTTMDGVATKPTNLSIQCHHDNVTRGNSIAINWDVPKTPNGKVVSYLIHLLGNPMSTVDREMWGPKIRRIDEPHHKTLYESVSPNTNYTVTVSAITRHKKNGEPATGSCLMPVSTPDAIGRTMWSKVNLDSKYVLKLYLPKISERNGPICCYRLYLVRINNDNKELPDPEKLNIATYQEVHSDNVTRSSAYIAEMISSKYFRPEIFLGDEKRFSENNDIIRDNDEICRKCLEGTPFLRKPEIIHIPPQGSLSNSDSELPILSEKDNLIKGANLTEHALKILESKLRDKRNAVTSDENPILSAVNPNVPLHDSSRDVFDGEIDINSNYTGFLEIIVRDRNNALMAYSKYFDIITPATEAEPIQSLNNMDYYLSIGVKAGAVLLGVILVFIVLWVFHHKKTKNELQGEDTLTLRDSLSRALFGRRNHNHSHFITSGNHKGFDAGPIHRLDLENAYKNRHKDTDYGFLREYEMLPNRFSDRTTKNSDLKENACKNRYPDIKAYDQTRVKLAVINGLQTTDYINANFVIGYKERKKFICAQGPMESTIDDFWRMIWEQHLEIIVMLTNLEEYNKAKCAKYWPEKVFDTKQFGDILVKFAQERKTGDYIERTLNVSKNKANVGEEEDRRQITQYHYLTWKDFMAPEHPHGIIKFIRQINSVYSLQRGPILVHCSAGVGRTGTLVALDSLIQQLEEEDSVSIYNTVCDLRHQRNFLVQSLKQYIFLYRALLDTGTFGNTDICIDTMASAIESLKRKPNEGKCKLEVEFEKLLATADEISKSCSVGENEENNMKNRSQEIIPYDRNRVILTPLPMRENSTYINASFIEGYDNSETFIIAQDPLENTIGDFWRMISEQSVTTLVMISEIGDGPRKCPRYWADDEVQYDHILVKYVHSESCPYYTRREFYVTNCKIDDTLKVTQFQYNGWPTVDGEVPEVCRGIIELVDQAYNHYKNNKNSGCRSPLTVHCSLGTDRSSIFVAMCILVQHLRLEKCVDICATTRKLRSQRTGLINSYAQYEFLHRAIINYSDLHHIAESTLD.

A signal peptide spans 1-28; the sequence is MALLYRRMSMLLNIILAYIFLCAICVQG. Ig-like C2-type domains are found at residues 29–125 and 131–230; these read SVKQ…TEFQ and PSKV…KEIT. Residues 29 to 805 lie on the Extracellular side of the membrane; sequence SVKQEWAEIG…MDYYLSIGVK (777 aa). N-linked (GlcNAc...) asparagine glycosylation is found at N40, N58, N64, N85, N109, N119, N162, N191, N196, N209, N255, N288, N302, N429, N442, N451, N516, N613, N701, and N755. An intrachain disulfide couples C45 to C112. C154 and C214 are oxidised to a cystine. Fibronectin type-III domains are found at residues 237–332, 334–435, and 439–547; these read PQVS…TLSY, PIFI…TMDG, and KPTN…TPDA. A helical transmembrane segment spans residues 806 to 823; that stretch reads AGAVLLGVILVFIVLWVF. Residues 824–1462 are Cytoplasmic-facing; the sequence is HHKKTKNELQ…LHHIAESTLD (639 aa). Tyrosine-protein phosphatase domains follow at residues 893–1156 and 1187–1450; these read FLRE…LLDT and LEVE…IINY. Residues C1097 and C1391 each act as phosphocysteine intermediate in the active site.

This sequence belongs to the protein-tyrosine phosphatase family. Receptor class subfamily.

It localises to the membrane. The enzyme catalyses O-phospho-L-tyrosyl-[protein] + H2O = L-tyrosyl-[protein] + phosphate. Functionally, possible cell adhesion receptor. The chain is Tyrosine-protein phosphatase 69D (Ptp69D) from Drosophila melanogaster (Fruit fly).